The chain runs to 264 residues: Membrane-spanning 4-domains subfamily A member 10 (264 aa).

Topologically, residues 1–57 are cytoplasmic; that stretch reads MKAEATVIPSRCARGQTTAAPGVQPWQTSVPQNTTQPKLLAPRQHEKSQKRSSLLKE. A compositionally biased stretch (polar residues) spans 17–37; it reads TTAAPGVQPWQTSVPQNTTQP. The interval 17–48 is disordered; the sequence is TTAAPGVQPWQTSVPQNTTQPKLLAPRQHEKS. The chain crosses the membrane as a helical span at residues 58-78; sequence LGAFHITIALLHLVFGGYLAS. The Extracellular portion of the chain corresponds to 79–89; the sequence is TVKSLHLVVLK. Residues 90 to 110 form a helical membrane-spanning segment; it reads SWYPFWGAASFLISGILAITM. The Cytoplasmic segment spans residues 111-119; the sequence is KTFSKTYLK. Residues 120-140 form a helical membrane-spanning segment; that stretch reads MLCLMTNLVSLFCVLSGLFVI. Over 141–169 the chain is Extracellular; it reads SKDLFLESPFESPIWRMYPNSTVHIQRLE. The chain crosses the membrane as a helical span at residues 170-190; sequence LALLCFTVLELFLPVPTAVTA. At 191–264 the chain is on the cytoplasmic side; it reads WRDRPSAKND…GAGIWTQTAN (74 aa).

It belongs to the MS4A family.

It is found in the membrane. Functionally, may be involved in signal transduction as a component of a multimeric receptor complex. This chain is Membrane-spanning 4-domains subfamily A member 10 (MS4A10), found in Pongo abelii (Sumatran orangutan).